Consider the following 820-residue polypeptide: Leucine--tRNA ligase (820 aa).

Positions 40–51 (PYPSGAGLHVGH) match the 'HIGH' region motif. The 'KMSKS' region motif lies at 601–605 (KMSKS). Lys-604 lines the ATP pocket.

It belongs to the class-I aminoacyl-tRNA synthetase family.

It is found in the cytoplasm. The enzyme catalyses tRNA(Leu) + L-leucine + ATP = L-leucyl-tRNA(Leu) + AMP + diphosphate. This chain is Leucine--tRNA ligase, found in Chlamydia pneumoniae (Chlamydophila pneumoniae).